A 334-amino-acid chain; its full sequence is Probable GTP 3',8-cyclase (334 aa).

Residues 24–256 form the Radical SAM core domain; the sequence is PYGRKVTGLR…RKKYMIDGVE (233 aa). Arg-33 contacts GTP. [4Fe-4S] cluster-binding residues include Cys-40 and Cys-44. Tyr-46 is a binding site for S-adenosyl-L-methionine. Cys-47 provides a ligand contact to [4Fe-4S] cluster. Position 85 (Lys-85) interacts with GTP. S-adenosyl-L-methionine is bound at residue Gly-89. Thr-113 lines the GTP pocket. Ser-137 provides a ligand contact to S-adenosyl-L-methionine. Lys-176 provides a ligand contact to GTP. [4Fe-4S] cluster-binding residues include Cys-269 and Cys-272. 274-276 contacts GTP; sequence RLR. Cys-286 contributes to the [4Fe-4S] cluster binding site.

This sequence belongs to the radical SAM superfamily. MoaA family. [4Fe-4S] cluster is required as a cofactor.

It carries out the reaction GTP + AH2 + S-adenosyl-L-methionine = (8S)-3',8-cyclo-7,8-dihydroguanosine 5'-triphosphate + 5'-deoxyadenosine + L-methionine + A + H(+). It participates in cofactor biosynthesis; molybdopterin biosynthesis. Functionally, catalyzes the cyclization of GTP to (8S)-3',8-cyclo-7,8-dihydroguanosine 5'-triphosphate. The protein is Probable GTP 3',8-cyclase of Methanosarcina mazei (strain ATCC BAA-159 / DSM 3647 / Goe1 / Go1 / JCM 11833 / OCM 88) (Methanosarcina frisia).